The following is a 201-amino-acid chain: uncharacterized protein (201 aa).

A disordered region spans residues 53–74 (PKKNTAHKNSTTSTVASSGNTT). Positions 59–74 (HKNSTTSTVASSGNTT) are enriched in polar residues. Residues 88–136 (AKRLSHKEVERRRREAISEGIKELANIVPGCEKNKGSILQRTAQYIRSL) form the bHLH domain.

The protein localises to the nucleus. This is an uncharacterized protein from Schizosaccharomyces pombe (strain 972 / ATCC 24843) (Fission yeast).